Consider the following 358-residue polypeptide: Plancitoxin-1 (358 aa).

The N-terminal stretch at M1–A26 is a signal peptide. An N-linked (GlcNAc...) asparagine glycan is attached at N274. The active site involves H303.

Belongs to the DNase II family. As to quaternary structure, plancitoxin is a heterodimer of alpha and beta subunits; disulfide-linked by a single disulfide bond. In terms of tissue distribution, venom gland.

The protein localises to the secreted. It catalyses the reaction Endonucleolytic cleavage to nucleoside 3'-phosphates and 3'-phosphooligonucleotide end-products.. Functionally, hydrolyzes DNA with an optimum pH of 7.2. Is potently hepatotoxic. It induces caspase-independent apoptosis (on rat liver cells) through the following procedure: binding to a specific receptor in the cytoplasmic membrane, entering the cell, entering the nucleus and degrading DNA. The sequence is that of Plancitoxin-1 from Acanthaster planci (Crown-of-thorns starfish).